A 60-amino-acid chain; its full sequence is UPF0509 protein Ent638_2183 (60 aa).

This sequence belongs to the UPF0509 family.

The protein is UPF0509 protein Ent638_2183 of Enterobacter sp. (strain 638).